A 280-amino-acid chain; its full sequence is Coiled-coil domain-containing protein 106 (280 aa).

Positions 63–101 form a coiled coil; sequence TQLHMALERNSWLQKRIEDLEEERDFLRCQLDKFISSAR. The segment covering 103–121 has biased composition (basic and acidic residues); that stretch reads EAEDHCRMKPGPRRMEGDS. The segment at 103-176 is disordered; it reads EAEDHCRMKP…KPKARERQRV (74 aa). S130 is subject to Phosphoserine. Low complexity predominate over residues 133–146; it reads ESAASSLSGASEEG. Residues 151-164 carry the Bipartite nuclear localization signal motif; it reads RRRQKQKGGASRRR. Over residues 152–168 the composition is skewed to basic residues; the sequence is RRQKQKGGASRRRFGKP.

Interacts with p53/TP53.

Its subcellular location is the nucleus. In terms of biological role, promotes the degradation of p53/TP53 protein and inhibits its transactivity. In Homo sapiens (Human), this protein is Coiled-coil domain-containing protein 106 (CCDC106).